The sequence spans 387 residues: D(4) dopamine receptor (387 aa).

Residues 1–34 (MGNSSATEDGGLLAGRGPESLGTGAGLGGAGAAA) are Extracellular-facing. A glycan (N-linked (GlcNAc...) asparagine) is linked at asparagine 3. The chain crosses the membrane as a helical span at residues 35–57 (LVGGVLLIGLVLAGNSLVCVSVA). The Cytoplasmic segment spans residues 58-67 (SERTLQTPTN). A helical membrane pass occupies residues 68-90 (YFIVSLAAADLLLAVLVLPLFVY). Aspartate 77 lines the Na(+) pocket. Over 91 to 106 (SEVQGGVWLLSPRLCD) the chain is Extracellular. A disulfide bridge connects residues cysteine 105 and cysteine 180. The chain crosses the membrane as a helical span at residues 107–128 (TLMAMDVMLCTASIFNLCAISV). Serine 119 is a Na(+) binding site. Residues 129–146 (DRFVAVTVPLRYNQQGQC) lie on the Cytoplasmic side of the membrane. Residues 147 to 170 (QLLLIAATWLLSAAVASPVVCGLN) traverse the membrane as a helical segment. Over 171 to 186 (DVPGRDPAVCCLENRD) the chain is Extracellular. A helical transmembrane segment spans residues 187 to 208 (YVVYSSVCSFFLPCPLMLLLYW). The Cytoplasmic portion of the chain corresponds to 209–314 (ATFRGLRRWE…ITGRERKAMR (106 aa)). 2 disordered regions span residues 224-247 (KLHS…TQGP) and 287-306 (AALP…AKIT). A helical membrane pass occupies residues 315–337 (VLPVVVGAFLVCWTPFFVVHITR). The Extracellular portion of the chain corresponds to 338 to 346 (ALCPACFVS). A disulfide bridge links cysteine 340 with cysteine 343. The chain crosses the membrane as a helical span at residues 347–369 (PRLVSAVTWLGYVNSALNPIIYT). Topologically, residues 370-387 (IFNAEFRSVFRKTLRLRC) are cytoplasmic. Residue cysteine 387 is the site of S-palmitoyl cysteine attachment.

It belongs to the G-protein coupled receptor 1 family. Forms homo- and heterooligomers with DRD2. D4.7 allele exhibits higher affinity for homodimers compared to DRD2 heterodimers, while alleles D42. and 4.4 have similar affinities for both. The interaction with DRD2 may modulate agonist-induced downstream signaling. Interacts with CLIC6. Interacts with GPRASP1. May interact with ADORA2A. Interacts with KLHL12. Palmitoylated. Palmitoylation of the C-terminal Cys is important for normal expression at the cell membrane. Detected in olfactory bulb, hypothalamus, olfactory tubercle, brainstem and striatum.

It localises to the cell membrane. Its function is as follows. Dopamine receptor responsible for neuronal signaling in the mesolimbic system of the brain, an area of the brain that regulates emotion and complex behavior. Activated by dopamine, but also by epinephrine and norepinephrine, and by numerous synthetic agonists and drugs. Agonist binding triggers signaling via G proteins that inhibit adenylyl cyclase. Modulates the circadian rhythm of contrast sensitivity by regulating the rhythmic expression of NPAS2 in the retinal ganglion cells. The chain is D(4) dopamine receptor (Drd4) from Mus musculus (Mouse).